The chain runs to 221 residues: Peptide methionine sulfoxide reductase MsrA (221 aa).

Cys54 is an active-site residue.

It belongs to the MsrA Met sulfoxide reductase family.

It carries out the reaction L-methionyl-[protein] + [thioredoxin]-disulfide + H2O = L-methionyl-(S)-S-oxide-[protein] + [thioredoxin]-dithiol. The catalysed reaction is [thioredoxin]-disulfide + L-methionine + H2O = L-methionine (S)-S-oxide + [thioredoxin]-dithiol. Its function is as follows. Has an important function as a repair enzyme for proteins that have been inactivated by oxidation. Catalyzes the reversible oxidation-reduction of methionine sulfoxide in proteins to methionine. The chain is Peptide methionine sulfoxide reductase MsrA from Methylobacterium sp. (strain 4-46).